A 251-amino-acid chain; its full sequence is tRNA (guanine-N(7)-)-methyltransferase (251 aa).

The S-adenosyl-L-methionine site is built by glutamate 80, glutamate 105, aspartate 132, and aspartate 155. The active site involves aspartate 155. Substrate-binding positions include lysine 159, aspartate 191, and threonine 228–glutamate 231.

Belongs to the class I-like SAM-binding methyltransferase superfamily. TrmB family.

The enzyme catalyses guanosine(46) in tRNA + S-adenosyl-L-methionine = N(7)-methylguanosine(46) in tRNA + S-adenosyl-L-homocysteine. Its pathway is tRNA modification; N(7)-methylguanine-tRNA biosynthesis. In terms of biological role, catalyzes the formation of N(7)-methylguanine at position 46 (m7G46) in tRNA. This Histophilus somni (strain 2336) (Haemophilus somnus) protein is tRNA (guanine-N(7)-)-methyltransferase.